We begin with the raw amino-acid sequence, 311 residues long: MQENQQITKKEQYNLNKLQKRLRRNVGEAIADFNMIEEGDRIMVCLSGGKDSYTMLEILRNLQQSAPINFSLVAVNLDQKQPGFPEHVLPEYLETLGVEYKIVEENTYGIVKEKIPEGKTTCSLCSRLRRGILYRTATELGATKIALGHHRDDILQTLFLNMFYGGKMKGMPPKLMSDDGKHIVIRPLAYCREKDIQRFADAKAFPIIPCNLCGSQPNLQRQVIADMLRDWDKRYPGRIETMFSAMQNVVPSHLCDTNLFDFKGITHGSEVVNGGDLAFDREEIPLQPAGWQPEEDENQLDELRLNVVEVK.

The short motif at 47 to 52 (SGGKDS) is the PP-loop motif element. The [4Fe-4S] cluster site is built by C122, C125, and C213.

Belongs to the TtcA family. Homodimer. It depends on Mg(2+) as a cofactor. The cofactor is [4Fe-4S] cluster.

It is found in the cytoplasm. It carries out the reaction cytidine(32) in tRNA + S-sulfanyl-L-cysteinyl-[cysteine desulfurase] + AH2 + ATP = 2-thiocytidine(32) in tRNA + L-cysteinyl-[cysteine desulfurase] + A + AMP + diphosphate + H(+). It participates in tRNA modification. Its function is as follows. Catalyzes the ATP-dependent 2-thiolation of cytidine in position 32 of tRNA, to form 2-thiocytidine (s(2)C32). The sulfur atoms are provided by the cysteine/cysteine desulfurase (IscS) system. This chain is tRNA-cytidine(32) 2-sulfurtransferase, found in Escherichia coli O81 (strain ED1a).